We begin with the raw amino-acid sequence, 443 residues long: Xaa-Pro dipeptidase (443 aa).

Mn(2+)-binding residues include D246, D257, H339, E384, and E423.

This sequence belongs to the peptidase M24B family. Bacterial-type prolidase subfamily. It depends on Mn(2+) as a cofactor.

The catalysed reaction is Xaa-L-Pro dipeptide + H2O = an L-alpha-amino acid + L-proline. Its function is as follows. Splits dipeptides with a prolyl residue in the C-terminal position. This chain is Xaa-Pro dipeptidase, found in Klebsiella pneumoniae (strain 342).